A 144-amino-acid polypeptide reads, in one-letter code: Large ribosomal subunit protein uL15 (144 aa).

Positions 1–54 (MRLNTLSPAEGSKKAGKRLGRGIGSGLGKTGGRGHKGQKSRSGGGVRRGFEGGQ) are disordered. Residues 21 to 31 (RGIGSGLGKTG) show a composition bias toward gly residues.

The protein belongs to the universal ribosomal protein uL15 family. Part of the 50S ribosomal subunit.

In terms of biological role, binds to the 23S rRNA. This is Large ribosomal subunit protein uL15 from Salmonella enteritidis PT4 (strain P125109).